The sequence spans 149 residues: NPC intracellular cholesterol transporter 2 (149 aa).

The signal sequence occupies residues M1–A19. 3 disulfide bridges follow: C27–C140, C42–C47, and C93–C99. A glycan (N-linked (GlcNAc...) asparagine) is linked at N58. K116 is modified (N6-acetyllysine).

This sequence belongs to the NPC2 family. In terms of assembly, interacts with NPC1 (via the second lumenal domain) in a cholestrol-dependent manner. Interacts with NUS1/NgBR, the interaction stabilizes NCP2 and regulates cholesterol trafficking. Interacts with DHDDS. Interacts with NEDD4L (via C2 domain). Interacts with NPC1L1. Post-translationally, N-glycosylated. Found in the epididymal fluid as a 19 kDa glycoprotein that is processed during its passage through the epididymis into a 16 kDa protein. As to expression, found in the fluid from the distal caput to cauda epididymis, not detected in the rete testis and the proximal and middle caput epididymal fluids (at protein level).

The protein resides in the secreted. The protein localises to the endoplasmic reticulum. It is found in the lysosome. It carries out the reaction cholesterol(in) = cholesterol(out). Functionally, intracellular cholesterol transporter which acts in concert with NPC1 and plays an important role in the egress of cholesterol from the lysosomal compartment. Unesterified cholesterol that has been released from LDLs in the lumen of the late endosomes/lysosomes is transferred by NPC2 to the cholesterol-binding pocket in the N-terminal domain of NPC1. May bind and mobilize cholesterol that is associated with membranes. NPC2 binds cholesterol with a 1:1 stoichiometry. Can bind a variety of sterols, including lathosterol, desmosterol and the plant sterols stigmasterol and beta-sitosterol. The secreted form of NCP2 regulates biliary cholesterol secretion via stimulation of ABCG5/ABCG8-mediated cholesterol transport. The sequence is that of NPC intracellular cholesterol transporter 2 from Sus scrofa (Pig).